A 434-amino-acid chain; its full sequence is ATP-dependent protease ATPase subunit HslU (434 aa).

ATP contacts are provided by residues Ile-18, 60-65, Asp-247, Glu-312, and Arg-384; that span reads GVGKTE.

It belongs to the ClpX chaperone family. HslU subfamily. As to quaternary structure, a double ring-shaped homohexamer of HslV is capped on each side by a ring-shaped HslU homohexamer. The assembly of the HslU/HslV complex is dependent on binding of ATP.

The protein localises to the cytoplasm. ATPase subunit of a proteasome-like degradation complex; this subunit has chaperone activity. The binding of ATP and its subsequent hydrolysis by HslU are essential for unfolding of protein substrates subsequently hydrolyzed by HslV. HslU recognizes the N-terminal part of its protein substrates and unfolds these before they are guided to HslV for hydrolysis. The chain is ATP-dependent protease ATPase subunit HslU from Brucella abortus (strain S19).